We begin with the raw amino-acid sequence, 326 residues long: Pyruvate dehydrogenase E1 component subunit alpha (326 aa).

In terms of assembly, heterodimer of an alpha and a beta chain. Requires thiamine diphosphate as cofactor.

It carries out the reaction N(6)-[(R)-lipoyl]-L-lysyl-[protein] + pyruvate + H(+) = N(6)-[(R)-S(8)-acetyldihydrolipoyl]-L-lysyl-[protein] + CO2. Functionally, the pyruvate dehydrogenase complex catalyzes the overall conversion of pyruvate to acetyl-CoA and CO(2). It contains multiple copies of three enzymatic components: pyruvate dehydrogenase (E1), dihydrolipoamide acetyltransferase (E2) and lipoamide dehydrogenase (E3). The polypeptide is Pyruvate dehydrogenase E1 component subunit alpha (pdhA) (Rickettsia conorii (strain ATCC VR-613 / Malish 7)).